The chain runs to 720 residues: Secreted RxLR effector protein 138 (720 aa).

Positions 1–20 are cleaved as a signal peptide; sequence MRSAFYVAIVLLVAAGSQTA. A RxLR-dEER motif is present at residues 56-71; that stretch reads RNLKDDFMFSAGDEER. A disordered region spans residues 264-335; it reads ESNTRKRNNV…VAPPEPSRLD (72 aa). Basic and acidic residues predominate over residues 320 to 335; it reads KQHDHRVAPPEPSRLD. N-linked (GlcNAc...) asparagine glycosylation is present at asparagine 609.

The protein belongs to the RxLR effector family.

It is found in the secreted. Its subcellular location is the host nucleus. Secreted effector that acts as an elicitor that induces cell death in host plant cells. The sequence is that of Secreted RxLR effector protein 138 from Plasmopara viticola (Downy mildew of grapevine).